The primary structure comprises 422 residues: Tyrosine-protein kinase STYK1 (422 aa).

A helical membrane pass occupies residues 26 to 46 (VIIVPTLLVTIFLILLGVILW). The Protein kinase domain occupies 114 to 384 (SEVLEQICSG…ELRLRLEAAI (271 aa)). ATP-binding positions include 120–128 (ICSGSCGPI) and Lys-147. Catalysis depends on Asp-251, which acts as the Proton acceptor.

This sequence belongs to the protein kinase superfamily. Tyr protein kinase family. As to expression, widely expressed. Highly expressed in brain, placenta and prostate. Expressed in tumor cells such as hepatoma cells L-02, cervix carcinoma cells HeLa, ovary cancer cells Ho8910 and chronic myelogenous leukemia cells K-562, but not in other tumor cells such as epidermoid carcinoma (A-431). Undetectable in most normal lung tissues, widely expressed in lung cancers.

The protein resides in the membrane. The catalysed reaction is L-tyrosyl-[protein] + ATP = O-phospho-L-tyrosyl-[protein] + ADP + H(+). In terms of biological role, probable tyrosine protein-kinase, which has strong transforming capabilities on a variety of cell lines. When overexpressed, it can also induce tumor cell invasion as well as metastasis in distant organs. May act by activating both MAP kinase and phosphatidylinositol 3'-kinases (PI3K) pathways. This chain is Tyrosine-protein kinase STYK1 (STYK1), found in Homo sapiens (Human).